A 338-amino-acid polypeptide reads, in one-letter code: Lipoate-protein ligase A (338 aa).

A BPL/LPL catalytic domain is found at 29-216 (PATQRVLFLW…AFFAHYGERV (188 aa)). Residues R71, 76–79 (GAVF), and K134 each bind ATP. K134 is a binding site for (R)-lipoate.

The protein belongs to the LplA family. In terms of assembly, monomer.

The protein localises to the cytoplasm. The enzyme catalyses L-lysyl-[lipoyl-carrier protein] + (R)-lipoate + ATP = N(6)-[(R)-lipoyl]-L-lysyl-[lipoyl-carrier protein] + AMP + diphosphate + H(+). The protein operates within protein modification; protein lipoylation via exogenous pathway; protein N(6)-(lipoyl)lysine from lipoate: step 1/2. It participates in protein modification; protein lipoylation via exogenous pathway; protein N(6)-(lipoyl)lysine from lipoate: step 2/2. Functionally, catalyzes both the ATP-dependent activation of exogenously supplied lipoate to lipoyl-AMP and the transfer of the activated lipoyl onto the lipoyl domains of lipoate-dependent enzymes. The chain is Lipoate-protein ligase A from Shigella boydii serotype 18 (strain CDC 3083-94 / BS512).